The following is a 166-amino-acid chain: Cofilin-1 (166 aa).

N-acetylalanine is present on Ala2. Phosphoserine is present on residues Ser3 and Ser8. The ADF-H domain maps to 4–153 (GVAVSDGVIK…KDRCTLAEKL (150 aa)). The residue at position 13 (Lys13) is an N6-acetyllysine. Thr25 is modified (phosphothreonine). The Nuclear localization signal signature appears at 30-34 (KKRKK). The residue at position 41 (Ser41) is a Phosphoserine. Tyr68 carries the phosphotyrosine modification. Lys73 carries the post-translational modification N6-acetyllysine. Residue Lys132 forms a Glycyl lysine isopeptide (Lys-Gly) (interchain with G-Cter in SUMO2) linkage. Tyr140 is subject to Phosphotyrosine. Position 144 is an N6-acetyllysine (Lys144). At Ser156 the chain carries Phosphoserine.

It belongs to the actin-binding proteins ADF family. In terms of assembly, can bind G- and F-actin in a 1:1 ratio of cofilin to actin. It is a major component of intranuclear and cytoplasmic actin rods. Interacts with the subcortical maternal complex (SCMC) via interaction with TLE6 and NLRP5. Interacts with C9orf72. Inactivated by phosphorylation on Ser-3. Phosphorylated on Ser-3 in resting cells. Dephosphorylated by PDXP/chronophin; this restores its activity in promoting actin filament depolymerization. The phosphorylation of Ser-24 may prevent recognition of the nuclear localization signal. Phosphorylated via a ARRB1-RAC1-LIMK1-PAK1 cascade upon active ligand stimulation of atypical chemokine receptor ACKR2.

It localises to the nucleus matrix. Its subcellular location is the cytoplasm. It is found in the cytoskeleton. The protein resides in the cell projection. The protein localises to the ruffle membrane. It localises to the lamellipodium membrane. Its subcellular location is the lamellipodium. It is found in the growth cone. The protein resides in the axon. Its function is as follows. Binds to F-actin and exhibits pH-sensitive F-actin depolymerizing activity. Important for normal progress through mitosis and normal cytokinesis. In conjunction with the subcortical maternal complex (SCMC), plays an essential role for zygotes to progress beyond the first embryonic cell divisions via regulation of actin dynamics. Required for the centralization of the mitotic spindle and symmetric division of zygotes. Plays a role in the regulation of cell morphology and cytoskeletal organization in epithelial cells. Required for the up-regulation of atypical chemokine receptor ACKR2 from endosomal compartment to cell membrane, increasing its efficiency in chemokine uptake and degradation. Required for neural tube morphogenesis and neural crest cell migration. The chain is Cofilin-1 (CFL1) from Bos taurus (Bovine).